The chain runs to 85 residues: Large ribosomal subunit protein bL31B (85 aa).

It belongs to the bacterial ribosomal protein bL31 family. Type B subfamily. In terms of assembly, part of the 50S ribosomal subunit.

This chain is Large ribosomal subunit protein bL31B, found in Macrococcus caseolyticus (strain JCSC5402) (Macrococcoides caseolyticum).